The sequence spans 340 residues: Protein-arginine kinase (340 aa).

The Phosphagen kinase C-terminal domain occupies 14-241 (IVLSSRIRLA…YQIINQEKLA (228 aa)). ATP-binding positions include 17–21 (SSRIR), Arg-112, 163–167 (RASVM), and 194–199 (RGIYGE).

It belongs to the ATP:guanido phosphotransferase family.

The catalysed reaction is L-arginyl-[protein] + ATP = N(omega)-phospho-L-arginyl-[protein] + ADP + H(+). Its function is as follows. Catalyzes the specific phosphorylation of arginine residues in proteins. The chain is Protein-arginine kinase from Clostridium tetani (strain Massachusetts / E88).